A 206-amino-acid polypeptide reads, in one-letter code: GTP cyclohydrolase 1 (206 aa).

Residues Cys98, His101, and Cys169 each coordinate Zn(2+).

This sequence belongs to the GTP cyclohydrolase I family. Toroid-shaped homodecamer, composed of two pentamers of five dimers.

It catalyses the reaction GTP + H2O = 7,8-dihydroneopterin 3'-triphosphate + formate + H(+). It functions in the pathway cofactor biosynthesis; 7,8-dihydroneopterin triphosphate biosynthesis; 7,8-dihydroneopterin triphosphate from GTP: step 1/1. The chain is GTP cyclohydrolase 1 from Helicobacter hepaticus (strain ATCC 51449 / 3B1).